The following is a 205-amino-acid chain: Dephospho-CoA kinase (205 aa).

Residues 7-205 enclose the DPCK domain; the sequence is IIGITGRIAS…QEIINYERFE (199 aa). 15–20 serves as a coordination point for ATP; sequence ASGKDA.

Belongs to the CoaE family.

Its subcellular location is the cytoplasm. The catalysed reaction is 3'-dephospho-CoA + ATP = ADP + CoA + H(+). Its pathway is cofactor biosynthesis; coenzyme A biosynthesis; CoA from (R)-pantothenate: step 5/5. Its function is as follows. Catalyzes the phosphorylation of the 3'-hydroxyl group of dephosphocoenzyme A to form coenzyme A. This is Dephospho-CoA kinase from Borrelia garinii subsp. bavariensis (strain ATCC BAA-2496 / DSM 23469 / PBi) (Borreliella bavariensis).